Consider the following 413-residue polypeptide: Glutaminase (413 aa).

A glutaminase region spans residues 23-307 (GELADYIPEL…LSDDMGLHLM (285 aa)). Positions 65, 114, 160, 167, 191, 243, and 261 each coordinate substrate. Residues 316–413 (AVRSITRDGD…SDGTICKERV (98 aa)) form the STAS domain.

It belongs to the glutaminase family. In terms of assembly, homotetramer.

It catalyses the reaction L-glutamine + H2O = L-glutamate + NH4(+). This chain is Glutaminase (glsA), found in Corynebacterium glutamicum (strain ATCC 13032 / DSM 20300 / JCM 1318 / BCRC 11384 / CCUG 27702 / LMG 3730 / NBRC 12168 / NCIMB 10025 / NRRL B-2784 / 534).